A 261-amino-acid polypeptide reads, in one-letter code: Triosephosphate isomerase (261 aa).

A substrate-binding site is contributed by 10–12 (NWK). His-100 functions as the Electrophile in the catalytic mechanism. The Proton acceptor role is filled by Glu-172. Residues Gly-178, Ser-218, and 239 to 240 (GG) contribute to the substrate site.

It belongs to the triosephosphate isomerase family. In terms of assembly, homodimer.

It localises to the cytoplasm. It carries out the reaction D-glyceraldehyde 3-phosphate = dihydroxyacetone phosphate. It participates in carbohydrate biosynthesis; gluconeogenesis. It functions in the pathway carbohydrate degradation; glycolysis; D-glyceraldehyde 3-phosphate from glycerone phosphate: step 1/1. Involved in the gluconeogenesis. Catalyzes stereospecifically the conversion of dihydroxyacetone phosphate (DHAP) to D-glyceraldehyde-3-phosphate (G3P). In Mycobacterium sp. (strain JLS), this protein is Triosephosphate isomerase.